The following is a 204-amino-acid chain: Octanoyltransferase (204 aa).

Positions 30 to 204 (CETPDEIWLL…QSFINQLTDV (175 aa)) constitute a BPL/LPL catalytic domain. Residues 69–76 (RGGQITYH), 136–138 (SLG), and 149–151 (GIA) contribute to the substrate site. The Acyl-thioester intermediate role is filled by C167.

Belongs to the LipB family.

It localises to the cytoplasm. It catalyses the reaction octanoyl-[ACP] + L-lysyl-[protein] = N(6)-octanoyl-L-lysyl-[protein] + holo-[ACP] + H(+). The protein operates within protein modification; protein lipoylation via endogenous pathway; protein N(6)-(lipoyl)lysine from octanoyl-[acyl-carrier-protein]: step 1/2. Its function is as follows. Catalyzes the transfer of endogenously produced octanoic acid from octanoyl-acyl-carrier-protein onto the lipoyl domains of lipoate-dependent enzymes. Lipoyl-ACP can also act as a substrate although octanoyl-ACP is likely to be the physiological substrate. The polypeptide is Octanoyltransferase (Nitrosomonas europaea (strain ATCC 19718 / CIP 103999 / KCTC 2705 / NBRC 14298)).